The primary structure comprises 896 residues: Valine--tRNA ligase (896 aa).

Positions 43–53 (PNVTGSLHIGH) match the 'HIGH' region motif. The short motif at 545–549 (KMSKS) is the 'KMSKS' region element. Position 548 (K548) interacts with ATP. The stretch at 831–857 (DLDAERARLAKGIAAAEKERDGLAARL) forms a coiled coil.

This sequence belongs to the class-I aminoacyl-tRNA synthetase family. ValS type 1 subfamily. In terms of assembly, monomer.

It localises to the cytoplasm. The catalysed reaction is tRNA(Val) + L-valine + ATP = L-valyl-tRNA(Val) + AMP + diphosphate. Catalyzes the attachment of valine to tRNA(Val). As ValRS can inadvertently accommodate and process structurally similar amino acids such as threonine, to avoid such errors, it has a 'posttransfer' editing activity that hydrolyzes mischarged Thr-tRNA(Val) in a tRNA-dependent manner. This chain is Valine--tRNA ligase, found in Rhizorhabdus wittichii (strain DSM 6014 / CCUG 31198 / JCM 15750 / NBRC 105917 / EY 4224 / RW1) (Sphingomonas wittichii).